Reading from the N-terminus, the 257-residue chain is Small ribosomal subunit protein eS1 (257 aa).

The tract at residues 236-257 is disordered; that stretch reads TSAEGEKIERPDDYEPPVQESV. Residues 239–248 show a composition bias toward basic and acidic residues; that stretch reads EGEKIERPDD.

This sequence belongs to the eukaryotic ribosomal protein eS1 family. As to quaternary structure, component of the small ribosomal subunit. Mature ribosomes consist of a small (40S) and a large (60S) subunit. The 40S subunit contains about 33 different proteins and 1 molecule of RNA (18S). The 60S subunit contains about 49 different proteins and 3 molecules of RNA (28S, 5.8S and 5S).

It localises to the cytoplasm. The polypeptide is Small ribosomal subunit protein eS1 (Brugia malayi (Filarial nematode worm)).